The following is a 290-amino-acid chain: Festuclavine dehydrogenase easG (290 aa).

Belongs to the fgaFS/easG family.

The enzyme catalyses festuclavine + NAD(+) = 6,8-dimethyl-6,7-didehydroergoline + NADH + H(+). It participates in alkaloid biosynthesis; ergot alkaloid biosynthesis. Functionally, festuclavine dehydrogenase; part of the gene cluster that mediates the biosynthesis of fumiclavanine C, a fungal ergot alkaloid. DmaW catalyzes the first step of ergot alkaloid biosynthesis by condensing dimethylallyl diphosphate (DMAP) and tryptophan to form 4-dimethylallyl-L-tryptophan. The second step is catalyzed by the methyltransferase easF that methylates 4-dimethylallyl-L-tryptophan in the presence of S-adenosyl-L-methionine, resulting in the formation of 4-dimethylallyl-L-abrine. The catalase easC and the FAD-dependent oxidoreductase easE then transform 4-dimethylallyl-L-abrine to chanoclavine-I which is further oxidized by EasD in the presence of NAD(+), resulting in the formation of chanoclavine-I aldehyde. EasA reduces chanoclavine-I aldehyde to dihydrochanoclavine-I aldehyde that spontaneously dehydrates to form 6,8-dimethyl-6,7-didehydroergoline. EasG then catalyzes the reduction of 6,8-dimethyl-6,7-didehydroergoline to form festuclavine. Hydrolysis of festuclavine by easM then leads to the formation of fumigaclavine B which is in turn acetylated by easN to fumigaclavine A. Finally, easL catalyzes the conversion of fumigaclavine A into fumigaclavine C by attaching a dimethylallyl moiety to C-2 of the indole nucleus. In Aspergillus fumigatus (strain ATCC MYA-4609 / CBS 101355 / FGSC A1100 / Af293) (Neosartorya fumigata), this protein is Festuclavine dehydrogenase easG.